Reading from the N-terminus, the 101-residue chain is Small ribosomal subunit protein uS14 (101 aa).

It belongs to the universal ribosomal protein uS14 family. As to quaternary structure, part of the 30S ribosomal subunit. Contacts proteins S3 and S10.

Binds 16S rRNA, required for the assembly of 30S particles and may also be responsible for determining the conformation of the 16S rRNA at the A site. In Burkholderia lata (strain ATCC 17760 / DSM 23089 / LMG 22485 / NCIMB 9086 / R18194 / 383), this protein is Small ribosomal subunit protein uS14.